Here is a 369-residue protein sequence, read N- to C-terminus: Developmentally-regulated G-protein 3 (369 aa).

The OBG-type G domain occupies 66–291; it reads SRVGLVGFPS…LLDKIWEYLD (226 aa). GTP-binding positions include 72–79, 118–122, and 249–252; these read GFPSVGKS, DLPGI, and NKID. A TGS domain is found at 291 to 367; the sequence is DLTRIYTKPK…EDEDVVQIVK (77 aa).

Belongs to the TRAFAC class OBG-HflX-like GTPase superfamily. OBG GTPase family.

Its function is as follows. Binds GDP and GTP, and has low GTPase activity in vitro. The polypeptide is Developmentally-regulated G-protein 3 (DRG3) (Arabidopsis thaliana (Mouse-ear cress)).